Reading from the N-terminus, the 487-residue chain is b(0,+)-type amino acid transporter 1 (487 aa).

The interval 1 to 22 (MGETVPRRRREDEKSIQSDEPK) is disordered. Residues 1-31 (MGETVPRRRREDEKSIQSDEPKTTSLQKEVG) lie on the Cytoplasmic side of the membrane. Phosphoserine is present on Ser18. A helical transmembrane segment spans residues 32–55 (LISGICIIVGTIIGSGIFISPKSV). 43–47 (IIGSG) is an L-arginine binding site. Residues 56–62 (LSNTQAV) are Extracellular-facing. A helical membrane pass occupies residues 63–84 (GPCLIIWAACGVLGTLGALCFA). Over 85-110 (ELGTMITKSGGEYPYLMEAFGPIPAY) the chain is Cytoplasmic. A helical membrane pass occupies residues 111 to 137 (LFSWSSLLVMKPSSFAIICLSFSEYVA). The Extracellular portion of the chain corresponds to 138-147 (TPFYSGCEPP). Helical transmembrane passes span 148 to 169 (KVVVKCLAAAAIMLITTVNSLS) and 170 to 193 (VRLGSYVQNFFTAAKLVIVAIIII). Topologically, residues 194 to 217 (SGLVLLAQGNTKNFENSFEGAEVS) are extracellular. The helical transmembrane segment at 218–238 (VGAISLALYNGLWAYDGWNQL) threads the bilayer. Asp233 contributes to the L-arginine binding site. The Cytoplasmic portion of the chain corresponds to 239–251 (NYITEELRNPFRN). A helical membrane pass occupies residues 252–274 (LPLAIIFGIPLVTVCYILINISY). Topologically, residues 275–302 (FTVMTPTELLQSQAVAVTFGDRVLYPAS) are extracellular. Residues 303–325 (WIVPVFVAFSTIGAANGTCFTAG) traverse the membrane as a helical segment. The Cytoplasmic segment spans residues 326–351 (RLVYVAGREGHMLKVLSYISVRRLTP). Transmembrane regions (helical) follow at residues 352–370 (APAIIFYGIVATIYIIPGD) and 371–391 (INSLVNYFSFATWLFYGLTIL). Residues 392-410 (GLIVMRFTRKELERPIKVP) lie on the Cytoplasmic side of the membrane. The chain crosses the membrane as a helical span at residues 411–431 (IFIPILVTFIAAFLVLAPVIT). Topologically, residues 432–434 (NPA) are extracellular. A helical membrane pass occupies residues 435–450 (WEYLYCVLFILSGLVF). The Cytoplasmic segment spans residues 451–487 (YFLFVYYKFEWAQKISKPITMHLQMLMEVVPPEPDPK).

It belongs to the amino acid-polyamine-organocation (APC) superfamily. As to quaternary structure, disulfide-linked heterodimer composed of the catalytic light chain subunit SLC7A9 and the heavy chain subunit. The heterodimer is the minimal functional unit. Assembles in heterotetramers (dimers of heterodimers) and higher order oligomers. Interacts with CAV1. As to expression, kidney and small intestine.

Its subcellular location is the apical cell membrane. It carries out the reaction L-leucine(out) + L-arginine(in) = L-leucine(in) + L-arginine(out). It catalyses the reaction L-histidine(out) + L-arginine(in) = L-histidine(in) + L-arginine(out). The enzyme catalyses L-arginine(in) + L-phenylalanine(out) = L-arginine(out) + L-phenylalanine(in). The catalysed reaction is L-cysteine(out) + L-arginine(in) = L-cysteine(in) + L-arginine(out). It carries out the reaction L-cystine(out) + L-arginine(in) = L-cystine(in) + L-arginine(out). It catalyses the reaction L-lysine(out) + L-arginine(in) = L-lysine(in) + L-arginine(out). Mediates the electrogenic exchange between cationic amino acids and neutral amino acids, with a stoichiometry of 1:1. Has system b(0,+)-like activity with high affinity for extracellular cationic amino acids and L-cystine and lower affinity for intracellular neutral amino acids. Substrate exchange is driven by high concentration of intracellular neutral amino acids and the intracellular reduction of L-cystine to L-cysteine. Required for reabsorption of L-cystine and dibasic amino acids across the brush border membrane in renal proximal tubules. This chain is b(0,+)-type amino acid transporter 1, found in Oryctolagus cuniculus (Rabbit).